A 740-amino-acid polypeptide reads, in one-letter code: Elongation factor 2 (740 aa).

The 242-residue stretch at 23–264 (AQIRNAGTLA…MIIEHVPPPN (242 aa)) folds into the tr-type G domain. GTP contacts are provided by residues 32–39 (AHVDHGKT), 98–102 (DTPGH), and 152–155 (NKID). H605 carries the diphthamide modification.

The protein belongs to the TRAFAC class translation factor GTPase superfamily. Classic translation factor GTPase family. EF-G/EF-2 subfamily.

The protein resides in the cytoplasm. Its function is as follows. Catalyzes the GTP-dependent ribosomal translocation step during translation elongation. During this step, the ribosome changes from the pre-translocational (PRE) to the post-translocational (POST) state as the newly formed A-site-bound peptidyl-tRNA and P-site-bound deacylated tRNA move to the P and E sites, respectively. Catalyzes the coordinated movement of the two tRNA molecules, the mRNA and conformational changes in the ribosome. The protein is Elongation factor 2 of Pyrobaculum calidifontis (strain DSM 21063 / JCM 11548 / VA1).